A 55-amino-acid polypeptide reads, in one-letter code: Neurotoxin B-IV (55 aa).

Pro10 carries the hydroxyproline modification. Disulfide bonds link Cys12/Cys52, Cys16/Cys48, Cys23/Cys41, and Cys26/Cys37.

This sequence belongs to the worm B-toxin family.

The protein localises to the secreted. Functionally, this toxin increases the excitability of nerves by delaying the inactivation of the voltage-gated sodium channel (Nav). Only acts on some crustacean. Is more abundant, but 15-fold less toxic than neurotoxin B-II. This chain is Neurotoxin B-IV, found in Cerebratulus lacteus (Milky ribbon worm).